The sequence spans 347 residues: UDP-glucose 4-epimerase (347 aa).

NAD(+)-binding positions include 11–13 (GYI), 32–36 (DNFHN), 65–66 (DI), F87, and K91. Residue 131–133 (SAT) coordinates substrate. The active-site Proton acceptor is the Y156. NAD(+) contacts are provided by K160 and Y184. Substrate contacts are provided by residues 184 to 186 (YFN), 205 to 207 (NNL), 223 to 225 (NVF), R238, and 299 to 302 (REGD).

The protein belongs to the NAD(P)-dependent epimerase/dehydratase family. In terms of assembly, homodimer. NAD(+) serves as cofactor.

It catalyses the reaction UDP-alpha-D-glucose = UDP-alpha-D-galactose. The catalysed reaction is UDP-N-acetyl-alpha-D-glucosamine = UDP-N-acetyl-alpha-D-galactosamine. It functions in the pathway carbohydrate metabolism; galactose metabolism. Its function is as follows. Catalyzes two distinct but analogous reactions: the reversible epimerization of UDP-glucose to UDP-galactose and the reversible epimerization of UDP-N-acetylglucosamine to UDP-N-acetylgalactosamine. The reaction with UDP-Gal plays a critical role in the Leloir pathway of galactose catabolism in which galactose is converted to the glycolytic intermediate glucose 6-phosphate. It contributes to the catabolism of dietary galactose and enables the endogenous biosynthesis of both UDP-Gal and UDP-GalNAc when exogenous sources are limited. Both UDP-sugar interconversions are important in the synthesis of glycoproteins and glycolipids. This chain is UDP-glucose 4-epimerase (Gale), found in Mus musculus (Mouse).